The sequence spans 370 residues: Putative L-lysine 2,3-aminomutase aq_454 (370 aa).

The region spanning 107–322 is the Radical SAM core domain; it reads HRYPDRVLLN…RGRLSGFGIP (216 aa). [4Fe-4S] cluster-binding residues include Cys121, Cys125, and Cys128. An N6-(pyridoxal phosphate)lysine modification is found at Lys334.

It belongs to the radical SAM superfamily. KamA family. [4Fe-4S] cluster serves as cofactor. Pyridoxal 5'-phosphate is required as a cofactor.

The polypeptide is Putative L-lysine 2,3-aminomutase aq_454 (Aquifex aeolicus (strain VF5)).